The following is a 300-amino-acid chain: N-acetylmuramic acid 6-phosphate etherase (300 aa).

The SIS domain occupies 57–220; the sequence is IAVAFQSGGR…TTGAMIRTGK (164 aa). Glu-85 functions as the Proton donor in the catalytic mechanism. Glu-116 is a catalytic residue.

It belongs to the GCKR-like family. MurNAc-6-P etherase subfamily. As to quaternary structure, homodimer.

It catalyses the reaction N-acetyl-D-muramate 6-phosphate + H2O = N-acetyl-D-glucosamine 6-phosphate + (R)-lactate. It functions in the pathway amino-sugar metabolism; 1,6-anhydro-N-acetylmuramate degradation. The protein operates within amino-sugar metabolism; N-acetylmuramate degradation. It participates in cell wall biogenesis; peptidoglycan recycling. Its function is as follows. Specifically catalyzes the cleavage of the D-lactyl ether substituent of MurNAc 6-phosphate, producing GlcNAc 6-phosphate and D-lactate. Together with AnmK, is also required for the utilization of anhydro-N-acetylmuramic acid (anhMurNAc) either imported from the medium or derived from its own cell wall murein, and thus plays a role in cell wall recycling. The sequence is that of N-acetylmuramic acid 6-phosphate etherase from Aliivibrio fischeri (strain MJ11) (Vibrio fischeri).